Consider the following 344-residue polypeptide: Serine/arginine-rich splicing factor 6 (344 aa).

One can recognise an RRM 1 domain in the interval 1 to 72 (MPRVYIGRLS…ERVIVEHARG (72 aa)). S45, S81, and S84 each carry phosphoserine. The disordered stretch occupies residues 75-103 (RDRDGYSYGSRSGGGGYSSRRTSGRDKYG). In terms of domain architecture, RRM 2 spans 110-183 (YRLIVENLSS…RNIRLIEDKP (74 aa)). An N6-acetyllysine modification is found at K165. The interval 176 to 344 (IRLIEDKPRT…RSRSRSSSRD (169 aa)) is disordered. A Glycyl lysine isopeptide (Lys-Gly) (interchain with G-Cter in SUMO2) cross-link involves residue K182. A compositionally biased stretch (basic residues) spans 185–250 (TSHRRSYSGS…RKSRSKSKSK (66 aa)). Basic and acidic residues-rich tracts occupy residues 264–273 (RSKDEYEKSR) and 280–291 (SPKENGKGDIKS). 2 positions are modified to phosphoserine: S297 and S299. S303 is subject to Phosphoserine; by DYRK1A. 2 positions are modified to phosphoserine: S314 and S316. The segment covering 322–344 (ATSRSRSRSRSKSRSRSRSSSRD) has biased composition (basic residues).

This sequence belongs to the splicing factor SR family. As to quaternary structure, binds SREK1/SFRS12. Interacts with DYRK1A. In terms of processing, extensively phosphorylated on serine residues in the RS domain. Phosphorylated by DYRK1A, probably in the RS domain. Phosphorylation by DYRK1A modulates alternative splice site selection and inhibits the expression of MAPT/Tau exon 10.

It localises to the nucleus. The protein resides in the nucleus speckle. Plays a role in constitutive splicing and modulates the selection of alternative splice sites. Plays a role in the alternative splicing of MAPT/Tau exon 10. Binds to alternative exons of TNC pre-mRNA and promotes the expression of alternatively spliced TNC. Plays a role in wound healing and in the regulation of keratinocyte differentiation and proliferation via its role in alternative splicing. In Homo sapiens (Human), this protein is Serine/arginine-rich splicing factor 6 (SRSF6).